A 384-amino-acid polypeptide reads, in one-letter code: BarH-like 2 homeobox protein (384 aa).

Disordered regions lie at residues 1-134 (MTAM…APRT), 154-237 (CAPY…TAFS), and 364-384 (PGGQPALNPLSNPIPGTPHPR). The segment covering 119-134 (QSAAQQLGSAAAAPRT) has biased composition (low complexity). Over residues 177-217 (ESFRPKLEQEDSKTKLDKREDSQSDIKCHGTKEEGDREITS) the composition is skewed to basic and acidic residues. The segment at residues 229–288 (PRKARTAFSDHQLNQLERSFERQKYLSVQDRMDLAAALNLTDTQVKTWYQNRRTKWKRQT) is a DNA-binding region (homeobox).

The protein belongs to the BAR homeobox family. In terms of tissue distribution, expressed in the ganglion cell layer of the retina in the eye and in the ventral zone of the dorsal thalamus of the CNS.

The protein resides in the nucleus. In terms of biological role, potential regulator of neural basic helix-loop-helix genes. It may down-regulate expression of ASCL1 and, within the thalamus, up-regulate NGN2, thereby regulating distinct patterns of neuronal differentiation. The protein is BarH-like 2 homeobox protein (Barhl2) of Rattus norvegicus (Rat).